Consider the following 637-residue polypeptide: 1-deoxy-D-xylulose-5-phosphate synthase (637 aa).

Thiamine diphosphate is bound by residues His-76 and 117 to 119 (AHS). Mg(2+) is bound at residue Asp-148. Thiamine diphosphate contacts are provided by residues 149–150 (GA), Asn-177, Tyr-287, and Glu-369. Asn-177 contributes to the Mg(2+) binding site.

This sequence belongs to the transketolase family. DXPS subfamily. Homodimer. Requires Mg(2+) as cofactor. Thiamine diphosphate is required as a cofactor.

It catalyses the reaction D-glyceraldehyde 3-phosphate + pyruvate + H(+) = 1-deoxy-D-xylulose 5-phosphate + CO2. Its pathway is metabolic intermediate biosynthesis; 1-deoxy-D-xylulose 5-phosphate biosynthesis; 1-deoxy-D-xylulose 5-phosphate from D-glyceraldehyde 3-phosphate and pyruvate: step 1/1. Its function is as follows. Catalyzes the acyloin condensation reaction between C atoms 2 and 3 of pyruvate and glyceraldehyde 3-phosphate to yield 1-deoxy-D-xylulose-5-phosphate (DXP). The polypeptide is 1-deoxy-D-xylulose-5-phosphate synthase (Pelagibacter ubique (strain HTCC1062)).